We begin with the raw amino-acid sequence, 336 residues long: Biotin synthase (336 aa).

Residues 51–270 (NQVQCNQLLN…IALARIMMPK (220 aa)) enclose the Radical SAM core domain. Residues Cys66, Cys70, and Cys73 each coordinate [4Fe-4S] cluster. Cys110, Cys141, Cys201, and Arg274 together coordinate [2Fe-2S] cluster.

This sequence belongs to the radical SAM superfamily. Biotin synthase family. Homodimer. [4Fe-4S] cluster is required as a cofactor. [2Fe-2S] cluster serves as cofactor.

The enzyme catalyses (4R,5S)-dethiobiotin + (sulfur carrier)-SH + 2 reduced [2Fe-2S]-[ferredoxin] + 2 S-adenosyl-L-methionine = (sulfur carrier)-H + biotin + 2 5'-deoxyadenosine + 2 L-methionine + 2 oxidized [2Fe-2S]-[ferredoxin]. The protein operates within cofactor biosynthesis; biotin biosynthesis; biotin from 7,8-diaminononanoate: step 2/2. Its function is as follows. Catalyzes the conversion of dethiobiotin (DTB) to biotin by the insertion of a sulfur atom into dethiobiotin via a radical-based mechanism. In Rhodopseudomonas palustris (strain ATCC BAA-98 / CGA009), this protein is Biotin synthase.